Consider the following 151-residue polypeptide: Small heat shock protein HspH (151 aa).

The sHSP domain maps to R28 to A138.

This sequence belongs to the small heat shock protein (HSP20) family.

In Bradyrhizobium diazoefficiens (strain JCM 10833 / BCRC 13528 / IAM 13628 / NBRC 14792 / USDA 110), this protein is Small heat shock protein HspH (hspH).